The chain runs to 984 residues: Putative formate dehydrogenase SH0748 (984 aa).

The 77-residue stretch at 3–79 (EHLIVTLDGT…PMTVNTQNND (77 aa)) folds into the 2Fe-2S ferredoxin-type domain. 4 residues coordinate [2Fe-2S] cluster: Cys-37, Cys-48, Cys-51, and Cys-63. Residues 79–119 (DVKASQKEALDRILEKHMLYCTVCDYNNGDCEIHNAMDAWG) form the 4Fe-4S His(Cys)3-ligated-type domain. Residues His-95, Cys-99, Cys-102, Cys-109, Cys-147, Cys-150, Cys-153, Cys-157, Cys-190, Cys-193, Cys-196, Cys-200, Cys-264, Cys-267, Cys-271, and Cys-299 each contribute to the [4Fe-4S] cluster site. 4Fe-4S ferredoxin-type domains are found at residues 138-165 (PFYR…VNET) and 181-211 (NDVP…VNME). The interval 252 to 984 (MRKERIKKTK…YVFPGNVVDK (733 aa)) is formate dehydrogenase. The 4Fe-4S Mo/W bis-MGD-type domain occupies 257–313 (IKKTKTVCTYCGVGCSFDVWTKDREVLKVQPSHDSPANKIATCVKGKFSWGHINSDQ).

In the C-terminal section; belongs to the prokaryotic molybdopterin-containing oxidoreductase family. [2Fe-2S] cluster is required as a cofactor. Requires [4Fe-4S] cluster as cofactor. It depends on Mo-bis(molybdopterin guanine dinucleotide) as a cofactor.

It catalyses the reaction formate + NAD(+) = CO2 + NADH. The chain is Putative formate dehydrogenase SH0748 from Staphylococcus haemolyticus (strain JCSC1435).